The primary structure comprises 162 residues: Beta-lactoglobulin-1 (162 aa).

2 disulfides stabilise this stretch: Cys-66-Cys-160 and Cys-106-Cys-119.

It belongs to the calycin superfamily. Lipocalin family. As to quaternary structure, monomer.

Its subcellular location is the secreted. In terms of biological role, lactoglobulin is the primary component of whey, it binds retinol and is probably involved in the transport of that molecule. The chain is Beta-lactoglobulin-1 (LGB1) from Felis catus (Cat).